We begin with the raw amino-acid sequence, 42 residues long: Photosystem I reaction center subunit IX (42 aa).

A helical transmembrane segment spans residues 8–28 (YLSTAPVIGVLWMTFTAGFII).

Belongs to the PsaJ family.

The protein localises to the plastid. It is found in the chloroplast thylakoid membrane. May help in the organization of the PsaE and PsaF subunits. This chain is Photosystem I reaction center subunit IX, found in Pyropia yezoensis (Susabi-nori).